The primary structure comprises 166 residues: Transcription elongation factor GreA (166 aa).

It belongs to the GreA/GreB family.

Necessary for efficient RNA polymerase transcription elongation past template-encoded arresting sites. The arresting sites in DNA have the property of trapping a certain fraction of elongating RNA polymerases that pass through, resulting in locked ternary complexes. Cleavage of the nascent transcript by cleavage factors such as GreA or GreB allows the resumption of elongation from the new 3'terminus. GreA releases sequences of 2 to 3 nucleotides. In Anaeromyxobacter sp. (strain K), this protein is Transcription elongation factor GreA.